Reading from the N-terminus, the 120-residue chain is NAD(P)H-quinone oxidoreductase subunit 3, chloroplastic (120 aa).

A run of 3 helical transmembrane segments spans residues 9–29 (IFWVFLIISSVIPILAFLISG), 64–84 (MFALVFVVFDVETVFLYPWAM), and 88–108 (VLGVSVFIEALIFVLILIVGL).

Belongs to the complex I subunit 3 family. As to quaternary structure, NDH is composed of at least 16 different subunits, 5 of which are encoded in the nucleus.

It localises to the plastid. The protein resides in the chloroplast thylakoid membrane. It carries out the reaction a plastoquinone + NADH + (n+1) H(+)(in) = a plastoquinol + NAD(+) + n H(+)(out). It catalyses the reaction a plastoquinone + NADPH + (n+1) H(+)(in) = a plastoquinol + NADP(+) + n H(+)(out). Its function is as follows. NDH shuttles electrons from NAD(P)H:plastoquinone, via FMN and iron-sulfur (Fe-S) centers, to quinones in the photosynthetic chain and possibly in a chloroplast respiratory chain. The immediate electron acceptor for the enzyme in this species is believed to be plastoquinone. Couples the redox reaction to proton translocation, and thus conserves the redox energy in a proton gradient. In Cucumis sativus (Cucumber), this protein is NAD(P)H-quinone oxidoreductase subunit 3, chloroplastic.